Here is a 306-residue protein sequence, read N- to C-terminus: Glutaminase (306 aa).

Substrate contacts are provided by S64, N115, E159, N166, Y190, Y242, and V260.

The protein belongs to the glutaminase family. In terms of assembly, homotetramer.

It carries out the reaction L-glutamine + H2O = L-glutamate + NH4(+). In Aliivibrio fischeri (strain MJ11) (Vibrio fischeri), this protein is Glutaminase.